Here is a 276-residue protein sequence, read N- to C-terminus: Ribosomal RNA small subunit methyltransferase A (276 aa).

S-adenosyl-L-methionine contacts are provided by asparagine 27, leucine 29, glycine 54, glutamate 75, aspartate 101, and asparagine 123.

This sequence belongs to the class I-like SAM-binding methyltransferase superfamily. rRNA adenine N(6)-methyltransferase family. RsmA subfamily.

It is found in the cytoplasm. It catalyses the reaction adenosine(1518)/adenosine(1519) in 16S rRNA + 4 S-adenosyl-L-methionine = N(6)-dimethyladenosine(1518)/N(6)-dimethyladenosine(1519) in 16S rRNA + 4 S-adenosyl-L-homocysteine + 4 H(+). In terms of biological role, specifically dimethylates two adjacent adenosines (A1518 and A1519) in the loop of a conserved hairpin near the 3'-end of 16S rRNA in the 30S particle. May play a critical role in biogenesis of 30S subunits. This is Ribosomal RNA small subunit methyltransferase A from Bartonella quintana (strain Toulouse) (Rochalimaea quintana).